Reading from the N-terminus, the 697-residue chain is Trishanku (697 aa).

The disordered stretch occupies residues 1 to 94 (MEIEPVVRIS…NNNSNSNGTD (94 aa)). Positions 12 to 47 (NGNNNQNNNNNNNNNTNNNSNNNNNNNNSSNINSTN) are enriched in low complexity. A compositionally biased stretch (polar residues) spans 58–72 (KMISNINNQKSPNPL). Residues 73 to 91 (NSSVDDNNNTNNNNNSNSN) are compositionally biased toward low complexity. One can recognise a BTB domain in the interval 122-189 (SDVIFKVGDR…ICIGILDLDY (68 aa)). The tract at residues 311-455 (IQQQQQQQQQ…DSANDDYEYS (145 aa)) is disordered. The segment covering 312–331 (QQQQQQQQQQLQSANGASGK) has biased composition (low complexity). Positions 332–344 (SHGKRSSSSHLKK) are enriched in basic residues. Residues 353-363 (GSCSSRCSSRR) show a composition bias toward low complexity. The span at 416-453 (DDFENDSEDGDDDDEDDDEDDDFTDDDDKDDSANDDYE) shows a compositional bias: acidic residues.

Expressed strongly in presumptive spore (prespore or psp) cells during the late G2 phase of cell cycle. Present at a low level in vegetative cells.

In terms of biological role, required for normal morphogenesis and cell-type stability. The sequence is that of Trishanku (triA) from Dictyostelium discoideum (Social amoeba).